Reading from the N-terminus, the 135-residue chain is Bacilliredoxin CHU_0972 (135 aa).

It belongs to the bacilliredoxin family.

This chain is Bacilliredoxin CHU_0972, found in Cytophaga hutchinsonii (strain ATCC 33406 / DSM 1761 / CIP 103989 / NBRC 15051 / NCIMB 9469 / D465).